Here is a 338-residue protein sequence, read N- to C-terminus: 5-dehydro-2-deoxygluconokinase (338 aa).

This sequence belongs to the carbohydrate kinase PfkB family.

The enzyme catalyses 5-dehydro-2-deoxy-D-gluconate + ATP = 6-phospho-5-dehydro-2-deoxy-D-gluconate + ADP + H(+). It participates in polyol metabolism; myo-inositol degradation into acetyl-CoA; acetyl-CoA from myo-inositol: step 5/7. Its function is as follows. Catalyzes the phosphorylation of 5-dehydro-2-deoxy-D-gluconate (2-deoxy-5-keto-D-gluconate or DKG) to 6-phospho-5-dehydro-2-deoxy-D-gluconate (DKGP). This is 5-dehydro-2-deoxygluconokinase from Mesomycoplasma hyopneumoniae (strain 232) (Mycoplasma hyopneumoniae).